The chain runs to 333 residues: Torsin-1A (333 aa).

A signal peptide spans 1–20 (MKLGRAALALLLLAPCVVRA). The segment at 92–252 (KPKKPLTLSL…VSVFNNKNSG (161 aa)) is interaction with SNAPIN. Residue 103–110 (GWTGTGKN) coordinates ATP. 2 N-linked (GlcNAc...) asparagine glycosylation sites follow: Asn-144 and Asn-159. The segment at 252–333 (GFWHSSLIDR…FTKLDYYLDD (82 aa)) is interaction with KLC1. The tract at residues 313–333 (KVFSDKGCKTVFTKLDYYLDD) is interaction with SYNE3.

This sequence belongs to the ClpA/ClpB family. Torsin subfamily. In terms of assembly, homohexamer. Interacts with TOR1B; the interaction may be specific of neural tissues. Interacts (ATP-bound) with TOR1AIP1 and TOR1AIP2; the interactions induce ATPase activity. Interacts with KLHL14; preferentially when ATP-free. Interacts with KLC1 (via TPR repeats); the interaction associates TOR1A with the kinesin oligomeric complex. Interacts with COPS4; the interaction associates TOR1A with the CSN complex. Interacts with SNAPIN; the interaction is direct and associates SNAPIN with the CSN complex. Interacts with STON2. Interacts (ATP-bound) with SYNE3 (via KASH domain); the interaction is required for SYNE3 nuclear envelope localization. Interacts with VIM; the interaction associates TOR1A with the cytoskeleton. Interacts with PLEC. Interacts (ATP-bound) with SLC6A3; regulates SLC6A3 transport to the plasma membrane. N-glycosylated. Widely expressed (at protein level).

The protein resides in the endoplasmic reticulum lumen. Its subcellular location is the nucleus membrane. It is found in the cell projection. The protein localises to the growth cone. It localises to the cytoplasmic vesicle membrane. The protein resides in the synapse. Its subcellular location is the synaptosome. It is found in the cytoplasm. The protein localises to the cytoskeleton. It localises to the cytoplasmic vesicle. The protein resides in the secretory vesicle. Its subcellular location is the synaptic vesicle. The enzyme catalyses ATP + H2O = ADP + phosphate + H(+). In terms of biological role, protein with chaperone functions important for the control of protein folding, processing, stability and localization as well as for the reduction of misfolded protein aggregates. Involved in the regulation of synaptic vesicle recycling, controls STON2 protein stability in collaboration with the COP9 signalosome complex (CSN). In the nucleus, may link the cytoskeleton with the nuclear envelope, this mechanism seems to be crucial for the control of nuclear polarity, cell movement and, specifically in neurons, nuclear envelope integrity. Participates in the cellular trafficking and may regulate the subcellular location of multipass membrane proteins such as the dopamine transporter SLC6A3, leading to the modulation of dopamine neurotransmission. In the endoplasmic reticulum, plays a role in the quality control of protein folding by increasing clearance of misfolded proteins such as SGCE variants or holding them in an intermediate state for proper refolding. May have a redundant function with TOR1B in non-neural tissues. This Mus musculus (Mouse) protein is Torsin-1A (Tor1a).